The chain runs to 80 residues: Exodeoxyribonuclease 7 small subunit (80 aa).

This sequence belongs to the XseB family. In terms of assembly, heterooligomer composed of large and small subunits.

The protein localises to the cytoplasm. The enzyme catalyses Exonucleolytic cleavage in either 5'- to 3'- or 3'- to 5'-direction to yield nucleoside 5'-phosphates.. Bidirectionally degrades single-stranded DNA into large acid-insoluble oligonucleotides, which are then degraded further into small acid-soluble oligonucleotides. In Aliivibrio salmonicida (strain LFI1238) (Vibrio salmonicida (strain LFI1238)), this protein is Exodeoxyribonuclease 7 small subunit.